The primary structure comprises 452 residues: 1,3-beta-glucanosyltransferase gel1 (452 aa).

Residues 1 to 19 (MKASAVTAALAVGASTVLA) form the signal peptide. Residues cysteine 71 and cysteine 100 are joined by a disulfide bond. Residues tyrosine 89, asparagine 159, glutamate 160, aspartate 201, and arginine 206 each coordinate (1,3-beta-D-glucosyl)n. Glutamate 160 acts as the Proton donor in catalysis. Intrachain disulfides connect cysteine 215–cysteine 345 and cysteine 233–cysteine 264. An N-linked (GlcNAc...) asparagine glycan is attached at asparagine 249. Glutamate 261 serves as the catalytic Nucleophile. Residue tyrosine 292 participates in (1,3-beta-D-glucosyl)n binding. The span at 325-340 (EKTSNPSGDGNYNKTG) shows a compositional bias: polar residues. The interval 325-419 (EKTSNPSGDG…SGTSTSSKGA (95 aa)) is disordered. The N-linked (GlcNAc...) asparagine glycan is linked to asparagine 337. The segment covering 393–419 (STATAEPGSGSATGSSSSGTSTSSKGA) has biased composition (low complexity). Alanine 419 carries GPI-like-anchor amidated alanine lipidation. Residues 420–452 (AAGLTVPSLTMAPVVVGAVTLLSTVFGAGLVLL) constitute a propeptide, removed in mature form.

It belongs to the glycosyl hydrolase 72 family. The GPI-like anchor contains a phosphoceramide lipid group.

The protein resides in the cell membrane. Functionally, splits internally a 1,3-beta-glucan molecule and transfers the newly generated reducing end (the donor) to the non-reducing end of another 1,3-beta-glucan molecule (the acceptor) forming a 1,3-beta linkage, resulting in the elongation of 1,3-beta-glucan chains in the cell wall. Involved in cell wall morphogenesis. The polypeptide is 1,3-beta-glucanosyltransferase gel1 (gel1) (Aspergillus fumigatus (strain ATCC MYA-4609 / CBS 101355 / FGSC A1100 / Af293) (Neosartorya fumigata)).